We begin with the raw amino-acid sequence, 178 residues long: uncharacterized protein (178 aa).

The N-terminal stretch at 1-19 is a signal peptide; that stretch reads MKKLLIVTMLFTLALSAQA.

It belongs to the opacity porin family.

This is an uncharacterized protein from Haemophilus influenzae (strain ATCC 51907 / DSM 11121 / KW20 / Rd).